Here is a 239-residue protein sequence, read N- to C-terminus: uncharacterized protein (239 aa).

The dksA C4-type; degenerate zinc-finger motif lies at 94-114 (CEVSGKEIPFERLEALPTATT). The segment covering 133–158 (ETPFGQFEFDDDEEIRAPYDSEDSYQ) has biased composition (acidic residues). Residues 133–182 (ETPFGQFEFDDDEEIRAPYDSEDSYQDVEKYGNSQTPQDMENPPLSYDDM) form a disordered region.

This is an uncharacterized protein from Bacillus subtilis (strain 168).